Here is a 556-residue protein sequence, read N- to C-terminus: Glucose-6-phosphate isomerase (556 aa).

Catalysis depends on Glu360, which acts as the Proton donor. Residues His391 and Lys519 contribute to the active site.

It belongs to the GPI family.

Its subcellular location is the cytoplasm. The catalysed reaction is alpha-D-glucose 6-phosphate = beta-D-fructose 6-phosphate. The protein operates within carbohydrate biosynthesis; gluconeogenesis. It functions in the pathway carbohydrate degradation; glycolysis; D-glyceraldehyde 3-phosphate and glycerone phosphate from D-glucose: step 2/4. Functionally, catalyzes the reversible isomerization of glucose-6-phosphate to fructose-6-phosphate. This chain is Glucose-6-phosphate isomerase, found in Acinetobacter baumannii (strain ATCC 17978 / DSM 105126 / CIP 53.77 / LMG 1025 / NCDC KC755 / 5377).